Here is a 426-residue protein sequence, read N- to C-terminus: MALASDPPKAGFRLSMLIYDTRFRSITIQIVVLLLFLAGLVWLLNNAYVNLEAKGKDFNFSFLWTRAGYDLAQTLIPYSNDDTHFRALIEGLLNTLLVSVLGCILATILGTIIGVLRLSQNWLVARIMTVYVETFRNIPLLLWILLMGTILAETRPVPKDFRLTEAMKAAGEEPKASMWFFDSVAVTNRGTNLPAPAFDHSLGVVDLGWNLPVSLNALAILAVMSASFWGWRRFMARAKAVQEATGTRPTTWWPSLLILFAPISALLYGLGFHLDYPQITKFDFTGGFQMLHSFTALLIALTLYTAAFIAEIVRAGIQAISRGQTEAAYALGLRPGRTMSLVILPQALRVIVPPLISQFLNLTKNSSLAIAVSYMDLRGTLGGITLNQTGRELECMLLMMLIYLTISLTISSLMNLYNKSIKLKER.

Helical transmembrane passes span 25-45, 96-116, 132-152, 211-231, 252-272, 293-313, 340-360, and 396-416; these read SITI…WLLN, LLVS…IGVL, VETF…TILA, LPVS…FWGW, WWPS…GLGF, SFTA…AEIV, SLVI…SQFL, and MLLM…LMNL. The 323-residue stretch at 92-414 folds into the ABC transmembrane type-1 domain; the sequence is LLNTLLVSVL…TISLTISSLM (323 aa).

This sequence belongs to the binding-protein-dependent transport system permease family. HisMQ subfamily. As to quaternary structure, bztB and BztC form a heterodimer which can form a membrane complex with a homodimer of BztD.

Its subcellular location is the cell inner membrane. Functionally, part of a binding-protein-dependent transport system for glutamate, glutamine, aspartate and asparagine. Probably responsible for the translocation of the substrate across the membrane. This chain is Glutamate/glutamine/aspartate/asparagine transport system permease protein BztB (bztB), found in Rhodobacter capsulatus (strain ATCC BAA-309 / NBRC 16581 / SB1003).